The chain runs to 58 residues: UPF0391 membrane protein Sbal195_1447 (58 aa).

2 helical membrane passes run 6-26 and 28-48; these read LVFLVVAVIAGLLGFTGIAGA and AGIAKIIFFVFIVLLVISLLV.

Belongs to the UPF0391 family.

Its subcellular location is the cell membrane. In Shewanella baltica (strain OS195), this protein is UPF0391 membrane protein Sbal195_1447.